A 916-amino-acid chain; its full sequence is DNA gyrase subunit A (916 aa).

The Topo IIA-type catalytic domain maps to 42-544 (LPDVRDGLKP…FGGDIADEDL (503 aa)). Tyr130 (O-(5'-phospho-DNA)-tyrosine intermediate) is an active-site residue. Residues 571-577 (QRRGGRG) carry the GyrA-box motif. Acidic residues predominate over residues 739–748 (SDDLEDETAD). 2 disordered regions span residues 739 to 774 (SDDLEDETADNENTLPSGKNGVRPSGRGSGGLRGMR) and 897 to 916 (ESELSGASVISNVTEPEAEN).

The protein belongs to the type II topoisomerase GyrA/ParC subunit family. As to quaternary structure, heterotetramer, composed of two GyrA and two GyrB chains. In the heterotetramer, GyrA contains the active site tyrosine that forms a transient covalent intermediate with DNA, while GyrB binds cofactors and catalyzes ATP hydrolysis.

The protein localises to the cytoplasm. It catalyses the reaction ATP-dependent breakage, passage and rejoining of double-stranded DNA.. A type II topoisomerase that negatively supercoils closed circular double-stranded (ds) DNA in an ATP-dependent manner to modulate DNA topology and maintain chromosomes in an underwound state. Negative supercoiling favors strand separation, and DNA replication, transcription, recombination and repair, all of which involve strand separation. Also able to catalyze the interconversion of other topological isomers of dsDNA rings, including catenanes and knotted rings. Type II topoisomerases break and join 2 DNA strands simultaneously in an ATP-dependent manner. This is DNA gyrase subunit A from Neisseria gonorrhoeae.